A 231-amino-acid polypeptide reads, in one-letter code: 2-C-methyl-D-erythritol 4-phosphate cytidylyltransferase (231 aa).

It belongs to the IspD/TarI cytidylyltransferase family. IspD subfamily.

The enzyme catalyses 2-C-methyl-D-erythritol 4-phosphate + CTP + H(+) = 4-CDP-2-C-methyl-D-erythritol + diphosphate. It functions in the pathway isoprenoid biosynthesis; isopentenyl diphosphate biosynthesis via DXP pathway; isopentenyl diphosphate from 1-deoxy-D-xylulose 5-phosphate: step 2/6. Catalyzes the formation of 4-diphosphocytidyl-2-C-methyl-D-erythritol from CTP and 2-C-methyl-D-erythritol 4-phosphate (MEP). In Clostridium novyi (strain NT), this protein is 2-C-methyl-D-erythritol 4-phosphate cytidylyltransferase.